Here is a 99-residue protein sequence, read N- to C-terminus: Monothiol glutaredoxin-S11 (99 aa).

Residues 1–99 (MDKVMRMSSE…LVPLVKPYLC (99 aa)) enclose the Glutaredoxin domain. Cys-21 serves as a coordination point for [2Fe-2S] cluster.

Belongs to the glutaredoxin family. CC-type subfamily.

The protein localises to the cytoplasm. May only reduce GSH-thiol disulfides, but not protein disulfides. The chain is Monothiol glutaredoxin-S11 (GRXS11) from Arabidopsis thaliana (Mouse-ear cress).